We begin with the raw amino-acid sequence, 89 residues long: Small ribosomal subunit protein bS16 (89 aa).

This sequence belongs to the bacterial ribosomal protein bS16 family.

The protein is Small ribosomal subunit protein bS16 of Nitrosomonas europaea (strain ATCC 19718 / CIP 103999 / KCTC 2705 / NBRC 14298).